The primary structure comprises 243 residues: Carboxy-S-adenosyl-L-methionine synthase (243 aa).

S-adenosyl-L-methionine contacts are provided by residues tyrosine 35, glycine 68–serine 70, aspartate 92–asparagine 93, and arginine 199.

The protein belongs to the class I-like SAM-binding methyltransferase superfamily. Cx-SAM synthase family. As to quaternary structure, homodimer.

The enzyme catalyses prephenate + S-adenosyl-L-methionine = carboxy-S-adenosyl-L-methionine + 3-phenylpyruvate + H2O. Functionally, catalyzes the conversion of S-adenosyl-L-methionine (SAM) to carboxy-S-adenosyl-L-methionine (Cx-SAM). The polypeptide is Carboxy-S-adenosyl-L-methionine synthase (Helicobacter pylori (strain P12)).